We begin with the raw amino-acid sequence, 267 residues long: MRFSIQPTILFFDSGVGGLSVYKETKQLLPDCHYLYCFDNGFFPYSEKDEKDIIDRTLRICQKINQAYPLDLIVIACNTASTVVLPELRRNFSIPIVGTVPAIKPAAEMSETKHIGLIATKGTIKRTYVNDLIKNYAHHCMVEKIGSTKLVEIAEQKLRGGEVDLNVLKQELSPWQTMKSLDSVVLGCTHFPLIKEEIECCLPQVKFFVSSGKAIAKRVKFLLKGIEVRSKIQKKNLIFCTKPLEDDKSVQQILDFGEFENLVILSE.

Substrate-binding positions include 13 to 14 (DS) and 45 to 46 (YS). Catalysis depends on Cys77, which acts as the Proton donor/acceptor. 78 to 79 (NT) provides a ligand contact to substrate. Cys188 (proton donor/acceptor) is an active-site residue. 189-190 (TH) contributes to the substrate binding site.

It belongs to the aspartate/glutamate racemases family.

It catalyses the reaction L-glutamate = D-glutamate. Its pathway is cell wall biogenesis; peptidoglycan biosynthesis. In terms of biological role, provides the (R)-glutamate required for cell wall biosynthesis. The protein is Glutamate racemase of Histophilus somni (strain 129Pt) (Haemophilus somnus).